A 107-amino-acid chain; its full sequence is Integration host factor subunit beta (107 aa).

The tract at residues 76-107 (FVPHFKPGKELRERVDGRAGEPLKADDPDDER) is disordered. Residues 82–101 (PGKELRERVDGRAGEPLKAD) are compositionally biased toward basic and acidic residues.

The protein belongs to the bacterial histone-like protein family. In terms of assembly, heterodimer of an alpha and a beta chain.

In terms of biological role, this protein is one of the two subunits of integration host factor, a specific DNA-binding protein that functions in genetic recombination as well as in transcriptional and translational control. This Burkholderia cenocepacia (strain ATCC BAA-245 / DSM 16553 / LMG 16656 / NCTC 13227 / J2315 / CF5610) (Burkholderia cepacia (strain J2315)) protein is Integration host factor subunit beta.